We begin with the raw amino-acid sequence, 67 residues long: Probable Sec-independent protein translocase protein TatE (67 aa).

A helical membrane pass occupies residues 4-21 (ISITKLLVVAALVVLLFG).

The protein belongs to the TatA/E family. TatE subfamily.

The protein resides in the cell inner membrane. Part of the twin-arginine translocation (Tat) system that transports large folded proteins containing a characteristic twin-arginine motif in their signal peptide across membranes. TatE shares overlapping functions with TatA. This Salmonella arizonae (strain ATCC BAA-731 / CDC346-86 / RSK2980) protein is Probable Sec-independent protein translocase protein TatE.